Reading from the N-terminus, the 900-residue chain is Bifunctional uridylyltransferase/uridylyl-removing enzyme (900 aa).

The segment at 1–342 (MPQVDPELFD…PCEQPVQIQP (342 aa)) is uridylyltransferase. Residues 343–705 (LNSRFQLRDG…TTQREFESGS (363 aa)) are uridylyl-removing. The region spanning 461–583 (VDAHTLNLIK…VGDQTHLDYL (123 aa)) is the HD domain. ACT domains follow at residues 706–789 (QIFI…IIQR) and 816–891 (VLEV…DNGR).

It belongs to the GlnD family. Mg(2+) serves as cofactor.

The enzyme catalyses [protein-PII]-L-tyrosine + UTP = [protein-PII]-uridylyl-L-tyrosine + diphosphate. The catalysed reaction is [protein-PII]-uridylyl-L-tyrosine + H2O = [protein-PII]-L-tyrosine + UMP + H(+). With respect to regulation, uridylyltransferase (UTase) activity is inhibited by glutamine, while glutamine activates uridylyl-removing (UR) activity. Its function is as follows. Modifies, by uridylylation and deuridylylation, the PII regulatory proteins (GlnB and homologs), in response to the nitrogen status of the cell that GlnD senses through the glutamine level. Under low glutamine levels, catalyzes the conversion of the PII proteins and UTP to PII-UMP and PPi, while under higher glutamine levels, GlnD hydrolyzes PII-UMP to PII and UMP (deuridylylation). Thus, controls uridylylation state and activity of the PII proteins, and plays an important role in the regulation of nitrogen assimilation and metabolism. The protein is Bifunctional uridylyltransferase/uridylyl-removing enzyme of Pseudomonas aeruginosa (strain UCBPP-PA14).